The following is a 967-amino-acid chain: A disintegrin and metalloproteinase with thrombospondin motifs 1 (967 aa).

A signal peptide spans 1–54 (MQPEVPLGSGKLKPCSDMGDIQRAAKFRSSQSAHMLLLLLASITMLLCVRGAHG). Positions 55-252 (RPTEEDEELV…TGPGSIRKKR (198 aa)) are excised as a propeptide. The segment at 198-252 (RGSGGAKCGVMDEETLPTSNSGRESQNTPDQWPLRNPTPQGAGKPTGPGSIRKKR) is disordered. Residues 203-210 (AKCGVMDE) carry the Cysteine switch motif. Cys205 lines the Zn(2+) pocket. The segment covering 213-227 (LPTSNSGRESQNTPD) has biased composition (polar residues). Positions 258–467 (RYVETMLVAD…GHGECLMDKP (210 aa)) constitute a Peptidase M12B domain. Residues Glu261, Asp344, and Asp351 each coordinate Ca(2+). Intrachain disulfides connect Cys333–Cys385, Cys362–Cys367, Cys379–Cys462, and Cys417–Cys446. Position 401 (His401) interacts with Zn(2+). Glu402 is a catalytic residue. Zn(2+) contacts are provided by His405 and His411. 2 residues coordinate Ca(2+): Cys462 and Asp465. Positions 476 to 558 (DLPGTLYDAN…TDMKHFATPV (83 aa)) constitute a Disintegrin domain. 4 cysteine pairs are disulfide-bonded: Cys488–Cys511, Cys499–Cys521, Cys506–Cys540, and Cys534–Cys545. Asn547 carries N-linked (GlcNAc...) asparagine glycosylation. One can recognise a TSP type-1 1 domain in the interval 559-614 (HGSWGPWGPWGDCSRTCGGGVQYTMRECDNPVPKNGGKYCEGKRVRYRSCNIEDCP). 3 cysteine pairs are disulfide-bonded: Cys571–Cys608, Cys575–Cys613, and Cys586–Cys598. N-linked (GlcNAc...) asparagine glycans are attached at residues Asn720, Asn764, and Asn782. A spacer region spans residues 725–857 (KKISGTVTST…PFNAIPTFSE (133 aa)). 2 consecutive TSP type-1 domains span residues 854–910 (TFSE…LPCP) and 911–967 (RWQV…TQCS). Asn945 carries an N-linked (GlcNAc...) asparagine glycan.

It depends on Zn(2+) as a cofactor. The precursor is cleaved by a furin endopeptidase. Post-translationally, glycosylated. Can be O-fucosylated by POFUT2 on a serine or a threonine residue found within the consensus sequence C1-X(2)-(S/T)-C2-G of the TSP type-1 repeat domains where C1 and C2 are the first and second cysteine residue of the repeat, respectively. Fucosylated repeats can then be further glycosylated by the addition of a beta-1,3-glucose residue by the glucosyltransferase, B3GALTL. Fucosylation mediates the efficient secretion of ADAMTS family members. Can also be C-glycosylated with one or two mannose molecules on tryptophan residues within the consensus sequence W-X-X-W of the TPRs, and N-glycosylated. These other glycosylations can also facilitate secretion.

Its subcellular location is the secreted. The protein resides in the extracellular space. It localises to the extracellular matrix. Functionally, metalloprotease which cleaves aggrecan, a cartilage proteoglycan, at the '1683-Glu-|-Leu-1684' site (within the chondroitin sulfate attachment domain), and may be involved in its turnover. Also cleaves COMP. Has angiogenic inhibitor activity. May play a critical role in follicular rupture. In Rattus norvegicus (Rat), this protein is A disintegrin and metalloproteinase with thrombospondin motifs 1 (Adamts1).